Here is a 581-residue protein sequence, read N- to C-terminus: Transcription factor GTE2 (581 aa).

A disordered region spans residues 130–153 (VKKTKTKKKKIGHGQKRSNPFATD). The span at 131-145 (KKTKTKKKKIGHGQK) shows a compositional bias: basic residues. Residues 169 to 275 (KVLKSMMTTC…SQFDVWFNPT (107 aa)) form the Bromo domain. 2 disordered regions span residues 329-399 (PLLP…KREM) and 470-581 (KRQG…KEAP). A compositionally biased stretch (pro residues) spans 346–365 (PSPPPSPVQPPPPPSPPPQP). Residues 389 to 470 (PKAKDPNKRE…NYRKMASKIK (82 aa)) form the NET domain. Composition is skewed to basic and acidic residues over residues 390 to 399 (KAKDPNKREM) and 493 to 503 (SAEKRGRKGGE). The span at 504–517 (AGEEDVDIGEDIPV) shows a compositional bias: acidic residues. The segment covering 530-564 (TAAAASGGSSSSGSFSSSGSSSSSDSESGSSSGSD) has biased composition (low complexity).

The protein localises to the nucleus. The sequence is that of Transcription factor GTE2 (GTE2) from Arabidopsis thaliana (Mouse-ear cress).